The chain runs to 284 residues: Hypoxanthine-guanine phosphoribosyltransferase (284 aa).

Residues Lys129, 194-202 (EDIIDTGKT), Lys226, and Asp253 contribute to the GMP site. Asp198 acts as the Proton acceptor in catalysis. Asp253 serves as a coordination point for Mg(2+).

Belongs to the purine/pyrimidine phosphoribosyltransferase family. As to quaternary structure, homotetramer. Mg(2+) is required as a cofactor.

Its subcellular location is the cytoplasm. It carries out the reaction IMP + diphosphate = hypoxanthine + 5-phospho-alpha-D-ribose 1-diphosphate. The catalysed reaction is GMP + diphosphate = guanine + 5-phospho-alpha-D-ribose 1-diphosphate. The protein operates within purine metabolism; IMP biosynthesis via salvage pathway; IMP from hypoxanthine: step 1/1. Its function is as follows. Converts guanine to guanosine monophosphate, and hypoxanthine to inosine monophosphate. Transfers the 5-phosphoribosyl group from 5-phosphoribosylpyrophosphate onto the purine. Plays a central role in the generation of purine nucleotides through the purine salvage pathway. This Schistosoma mansoni (Blood fluke) protein is Hypoxanthine-guanine phosphoribosyltransferase (HGPRT).